A 338-amino-acid polypeptide reads, in one-letter code: Ankyrin-repeat domain containing transcription coregulator asaA (338 aa).

Over residues 1 to 10 (MGAPHEEIQA) the composition is skewed to basic and acidic residues. Disordered regions lie at residues 1 to 70 (MGAP…LRST) and 112 to 137 (ASSVSPSSSAGPLSSSPSPSQRPFID). Basic residues predominate over residues 11–33 (LKRRREQNRLAQRRRRDNVRRRL). Over residues 42–70 (SPASASQTSLCSSTDSRVTLNPHQSLRST) the composition is skewed to polar residues. A compositionally biased stretch (low complexity) spans 112 to 130 (ASSVSPSSSAGPLSSSPSP). 3 ANK repeats span residues 235–264 (RWTTALHMAVSQGNFSVMRLLLSYGADPNA), 268–297 (EGATALHVGVMNGNYTMVAELLQRGADPTL), and 301–330 (AGWLPLHQAVHAGDEGCVRVLLEADQPVDY).

It functions in the pathway secondary metabolite biosynthesis. In terms of biological role, transcription coregulator involved in regulation of gene cluster that mediates the biosynthesis of aspergillic acid, a hydroxamic acid-containing pyrazinone with aliphatic side chains that originates from leucine (Leu) and isoleucine (Ile). Aspergillic acid has antibiotic properties and was shown to be lethal to mice. The chain is Ankyrin-repeat domain containing transcription coregulator asaA from Aspergillus flavus (strain ATCC 200026 / FGSC A1120 / IAM 13836 / NRRL 3357 / JCM 12722 / SRRC 167).